The following is a 329-amino-acid chain: Anthranilate phosphoribosyltransferase (329 aa).

5-phospho-alpha-D-ribose 1-diphosphate contacts are provided by residues glycine 78, glycine 81–aspartate 82, asparagine 88–threonine 91, lysine 106–serine 114, and serine 118. Anthranilate is bound at residue glycine 78. Serine 90 contributes to the Mg(2+) binding site. Asparagine 109 lines the anthranilate pocket. Anthranilate is bound at residue arginine 164. Aspartate 221 and glutamate 222 together coordinate Mg(2+).

Belongs to the anthranilate phosphoribosyltransferase family. In terms of assembly, homodimer. Mg(2+) serves as cofactor.

The enzyme catalyses N-(5-phospho-beta-D-ribosyl)anthranilate + diphosphate = 5-phospho-alpha-D-ribose 1-diphosphate + anthranilate. The protein operates within amino-acid biosynthesis; L-tryptophan biosynthesis; L-tryptophan from chorismate: step 2/5. Catalyzes the transfer of the phosphoribosyl group of 5-phosphorylribose-1-pyrophosphate (PRPP) to anthranilate to yield N-(5'-phosphoribosyl)-anthranilate (PRA). The chain is Anthranilate phosphoribosyltransferase from Thermus thermophilus (strain ATCC BAA-163 / DSM 7039 / HB27).